The chain runs to 321 residues: tRNA(Ile)-lysidine synthase (321 aa).

30-35 (SGGSDS) lines the ATP pocket.

The protein belongs to the tRNA(Ile)-lysidine synthase family.

It is found in the cytoplasm. The enzyme catalyses cytidine(34) in tRNA(Ile2) + L-lysine + ATP = lysidine(34) in tRNA(Ile2) + AMP + diphosphate + H(+). Functionally, ligates lysine onto the cytidine present at position 34 of the AUA codon-specific tRNA(Ile) that contains the anticodon CAU, in an ATP-dependent manner. Cytidine is converted to lysidine, thus changing the amino acid specificity of the tRNA from methionine to isoleucine. The chain is tRNA(Ile)-lysidine synthase from Chlamydia muridarum (strain MoPn / Nigg).